We begin with the raw amino-acid sequence, 178 residues long: Bifunctional protein PyrR (178 aa).

Residues 97-109 (VVLVDDVLYTGRT) carry the PRPP-binding motif.

Belongs to the purine/pyrimidine phosphoribosyltransferase family. PyrR subfamily.

The catalysed reaction is UMP + diphosphate = 5-phospho-alpha-D-ribose 1-diphosphate + uracil. Regulates the transcription of the pyrimidine nucleotide (pyr) operon in response to exogenous pyrimidines. Functionally, also displays a weak uracil phosphoribosyltransferase activity which is not physiologically significant. In Herpetosiphon aurantiacus (strain ATCC 23779 / DSM 785 / 114-95), this protein is Bifunctional protein PyrR.